The sequence spans 508 residues: MNPYVSYPEIHMKRNRTGSINSNPLYIPNPNVEPTPKPTKRRTKTGCLTCRRRRIKCDETKPFCLNCTKTNRECEGYPNSAAQMQAMGSVSPPELSVHSAQQPLIPTSIASSSAQTGDTFSGSSQSNFNTNDLNQMTSSSNLSTVTPIKQDHQKPMNLQGFPSAYQQHQYLQSNHNVPTNNSSSATSSTKPSVQSVGQASYPFLSSVSNFPSNFNSELFPFYFHDVVPSICAFEFDNNIALHFWSVTVPQFAQSMPCIANSLMAFASIKKLDVFGAYSHLTRALRCPMPGPNSFEYLLVSAFLTLTQLNLPAYDLNFCNNFIRKLSWSSSTKSNYVSLLIAMVVRELVFAILPRGCIWGFNGKPLSEVSVSRSHAPVSDSLFTIGLDILSQPTLSDDLHRERMVAWRDEYHVHLYSASRSPLTKVIDCVGHAVTKNNNDVLSGLQQLMQEECTDIAVLRTSYLCVLSLQNVFASNSKEFKLRAQIESHFGRLMLEHFMDCNVLNRPVL.

The segment at 15–43 (NRTGSINSNPLYIPNPNVEPTPKPTKRRT) is disordered. A DNA-binding region (zn(2)-C6 fungal-type) is located at residues 46 to 76 (GCLTCRRRRIKCDETKPFCLNCTKTNRECEG). 2 disordered regions span residues 110 to 146 (ASSS…STVT) and 174 to 193 (NHNV…KPSV). Residues 176 to 193 (NVPTNNSSSATSSTKPSV) are compositionally biased toward low complexity.

In terms of assembly, interacts with zfs1.

Its subcellular location is the nucleus. Its function is as follows. Induces sexual development and ascus formation. Also involved in calcium homeostasis. This is Transcriptional regulatory protein moc3 (moc3) from Schizosaccharomyces pombe (strain 972 / ATCC 24843) (Fission yeast).